The chain runs to 292 residues: Protease HtpX (292 aa).

Transmembrane regions (helical) follow at residues 4–24 (IILFLLTNLAVMLTFSLILAV) and 32–52 (IYGLLIMSSLFGFSGSILSLI). His-139 serves as a coordination point for Zn(2+). Glu-140 is an active-site residue. His-143 provides a ligand contact to Zn(2+). The next 2 helical transmembrane spans lie at 150–170 (ITMTLVQGVVNTFVIFISRII) and 193–213 (FLFFLISTFLEIIFGVLASII). Glu-222 provides a ligand contact to Zn(2+).

Belongs to the peptidase M48B family. Requires Zn(2+) as cofactor.

Its subcellular location is the cell membrane. This Buchnera aphidicola subsp. Schizaphis graminum (strain Sg) protein is Protease HtpX.